The sequence spans 327 residues: Gibberellin 2-beta-dioxygenase 1 (327 aa).

The Fe2OG dioxygenase domain maps to 171 to 276; the sequence is QSDCLFRVNH…RLSMIYFCGP (106 aa). Positions 200, 202, and 257 each coordinate Fe cation. Arg267 is an active-site residue.

The protein belongs to the iron/ascorbate-dependent oxidoreductase family. GA2OX subfamily. Fe cation is required as a cofactor. As to expression, predominantly expressed in roots, flowers, young fruits and seeds.

The enzyme catalyses gibberellin A1 + 2-oxoglutarate + O2 = gibberellin A8 + succinate + CO2. Its pathway is plant hormone biosynthesis; gibberellin biosynthesis. In terms of biological role, catalyzes the 2-beta-hydroxylation of several biologically active gibberellins, leading to the homeostatic regulation of their endogenous level. Catabolism of gibberellins (GAs) plays a central role in plant development. Converts GA9/GA20 to GA51/GA29 and GA4/GA1 to GA34/GA8. In Pisum sativum (Garden pea), this protein is Gibberellin 2-beta-dioxygenase 1 (GA2OX1).